A 172-amino-acid chain; its full sequence is ATP synthase subunit b (172 aa).

The chain crosses the membrane as a helical span at residues 17–37; sequence IVFSAIVLAIVLPFFWWFVIP.

The protein belongs to the ATPase B chain family. In terms of assembly, F-type ATPases have 2 components, F(1) - the catalytic core - and F(0) - the membrane proton channel. F(1) has five subunits: alpha(3), beta(3), gamma(1), delta(1), epsilon(1). F(0) has three main subunits: a(1), b(2) and c(10-14). The alpha and beta chains form an alternating ring which encloses part of the gamma chain. F(1) is attached to F(0) by a central stalk formed by the gamma and epsilon chains, while a peripheral stalk is formed by the delta and b chains.

It localises to the cell membrane. F(1)F(0) ATP synthase produces ATP from ADP in the presence of a proton or sodium gradient. F-type ATPases consist of two structural domains, F(1) containing the extramembraneous catalytic core and F(0) containing the membrane proton channel, linked together by a central stalk and a peripheral stalk. During catalysis, ATP synthesis in the catalytic domain of F(1) is coupled via a rotary mechanism of the central stalk subunits to proton translocation. Functionally, component of the F(0) channel, it forms part of the peripheral stalk, linking F(1) to F(0). In Tropheryma whipplei (strain TW08/27) (Whipple's bacillus), this protein is ATP synthase subunit b.